A 465-amino-acid polypeptide reads, in one-letter code: Cytochrome P450 85A1 (465 aa).

The helical transmembrane segment at 2-22 (GAMMVMMGLLLIIVSLCSALL) threads the bilayer. Cysteine 415 lines the heme pocket.

This sequence belongs to the cytochrome P450 family. Heme serves as cofactor. As to expression, mainly expressed in apical shoots, hypocotyls, siliques and roots. Also present in the female gametophyte.

The protein resides in the membrane. The catalysed reaction is 6-deoxoteasterone + reduced [NADPH--hemoprotein reductase] + O2 = 6alpha-hydroxyteasterone + oxidized [NADPH--hemoprotein reductase] + H2O + H(+). It carries out the reaction 6alpha-hydroxytyphasterol + reduced [NADPH--hemoprotein reductase] + O2 = teasterone + oxidized [NADPH--hemoprotein reductase] + 2 H2O + H(+). It catalyses the reaction 3-dehydro-6-deoxoteasterone + reduced [NADPH--hemoprotein reductase] + O2 = 3-dehydro-6alpha-hydroxyteasterone + oxidized [NADPH--hemoprotein reductase] + H2O + H(+). The enzyme catalyses 3-dehydro-6alpha-hydroxyteasterone + reduced [NADPH--hemoprotein reductase] + O2 = 3-dehydroteasterone + oxidized [NADPH--hemoprotein reductase] + 2 H2O + H(+). The catalysed reaction is 6-deoxotyphasterol + reduced [NADPH--hemoprotein reductase] + O2 = 6alpha-hydroxytyphasterol + oxidized [NADPH--hemoprotein reductase] + H2O + H(+). It carries out the reaction 6alpha-hydroxytyphasterol + reduced [NADPH--hemoprotein reductase] + O2 = typhasterol + oxidized [NADPH--hemoprotein reductase] + 2 H2O + H(+). It catalyses the reaction 6-deoxocastasterone + reduced [NADPH--hemoprotein reductase] + O2 = 6alpha-hydroxycastasterone + oxidized [NADPH--hemoprotein reductase] + H2O + H(+). The enzyme catalyses 6alpha-hydroxycastasterone + reduced [NADPH--hemoprotein reductase] + O2 = castasterone + oxidized [NADPH--hemoprotein reductase] + 2 H2O + H(+). The catalysed reaction is 6-deoxocastasterone + 2 reduced [NADPH--hemoprotein reductase] + 2 O2 = castasterone + 2 oxidized [NADPH--hemoprotein reductase] + 3 H2O + 2 H(+). It carries out the reaction 6-deoxoteasterone + 2 reduced [NADPH--hemoprotein reductase] + 2 O2 = teasterone + 2 oxidized [NADPH--hemoprotein reductase] + 3 H2O + 2 H(+). It catalyses the reaction 6-deoxotyphasterol + 2 reduced [NADPH--hemoprotein reductase] + 2 O2 = typhasterol + 2 oxidized [NADPH--hemoprotein reductase] + 3 H2O + 2 H(+). The enzyme catalyses 3-dehydro-6-deoxoteasterone + 2 reduced [NADPH--hemoprotein reductase] + 2 O2 = 3-dehydroteasterone + 2 oxidized [NADPH--hemoprotein reductase] + 3 H2O + 2 H(+). It participates in plant hormone biosynthesis; brassinosteroid biosynthesis. Catalyzes the C6-oxidation step in brassinosteroids biosynthesis. Converts 6-deoxocastasterone (6-deoxoCS) to castasterone (CS). May also convert 6-deoxoteasterone (6-deoxoTE) to teasterone (TE), 3-dehydro-6-deoxoteasterone (6-deoxo3DT, 6-deoxo-3-DHT) to 3-dehydroteasterone (3DT, 3-DHT), and 6-deoxotyphasterol (6-deoxoTY) to typhasterol (TY). Required for the initiation of female gametogenesis (megagametogenesis). This chain is Cytochrome P450 85A1, found in Arabidopsis thaliana (Mouse-ear cress).